Reading from the N-terminus, the 123-residue chain is Small ribosomal subunit protein uS12 (123 aa).

Residue D89 is modified to 3-methylthioaspartic acid.

Belongs to the universal ribosomal protein uS12 family. Part of the 30S ribosomal subunit. Contacts proteins S8 and S17. May interact with IF1 in the 30S initiation complex.

In terms of biological role, with S4 and S5 plays an important role in translational accuracy. Interacts with and stabilizes bases of the 16S rRNA that are involved in tRNA selection in the A site and with the mRNA backbone. Located at the interface of the 30S and 50S subunits, it traverses the body of the 30S subunit contacting proteins on the other side and probably holding the rRNA structure together. The combined cluster of proteins S8, S12 and S17 appears to hold together the shoulder and platform of the 30S subunit. This Syntrophotalea carbinolica (strain DSM 2380 / NBRC 103641 / GraBd1) (Pelobacter carbinolicus) protein is Small ribosomal subunit protein uS12.